A 597-amino-acid polypeptide reads, in one-letter code: TOX high mobility group box family member 4 (597 aa).

2 disordered regions span residues 160–224 and 520–546; these read GAIL…EPQK and VQEE…SPQP. A compositionally biased stretch (basic residues) spans 207-217; that stretch reads KPKTPKKKKKK. The Nuclear localization signal signature appears at 212-217; that stretch reads KKKKKK. Residues 222-290 constitute a DNA-binding region (HMG box); that stretch reads PQKPLSAYAL…EYLKALALYK (69 aa).

As to quaternary structure, component of the PNUTS-PP1 phosphatase complex.

The protein localises to the nucleus. The protein resides in the chromosome. Its function is as follows. Transcription factor that modulates cell fate reprogramming from the somatic state to the pluripotent and neuronal fate. Also acts as a regulatory component of protein phosphatase 1 (PP1) complexes. Component of the PNUTS-PP1 protein phosphatase complex, a PP1 complex that regulates RNA polymerase II transcription pause-release. PNUTS-PP1 also plays a role in the control of chromatin structure and cell cycle progression during the transition from mitosis into interphase. The protein is TOX high mobility group box family member 4 (tox4) of Xenopus tropicalis (Western clawed frog).